Here is a 444-residue protein sequence, read N- to C-terminus: Elongation factor 1-alpha (444 aa).

The tr-type G domain occupies 15–238 (KPHINLAVVG…DSFQPPQRPV (224 aa)). The segment at 24–31 (GHVDNGKS) is G1. Residue 24-31 (GHVDNGKS) coordinates GTP. Position 31 (Ser-31) interacts with Mg(2+). The interval 80–84 (GVTIE) is G2. The segment at 101–104 (DLPG) is G3. GTP contacts are provided by residues 101–105 (DLPGH) and 163–166 (NKMD). The tract at residues 163–166 (NKMD) is G4. The tract at residues 202 to 204 (SAI) is G5.

This sequence belongs to the TRAFAC class translation factor GTPase superfamily. Classic translation factor GTPase family. EF-Tu/EF-1A subfamily.

The protein resides in the cytoplasm. It catalyses the reaction GTP + H2O = GDP + phosphate + H(+). Its function is as follows. GTP hydrolase that promotes the GTP-dependent binding of aminoacyl-tRNA to the A-site of ribosomes during protein biosynthesis. In Pyrobaculum aerophilum (strain ATCC 51768 / DSM 7523 / JCM 9630 / CIP 104966 / NBRC 100827 / IM2), this protein is Elongation factor 1-alpha.